The primary structure comprises 1615 residues: MDQSQRTVAATPSSSRSYQFHPARAAIIDLFNLYLGRGSRQKPDESLRDPPNKSQKRVHAPNRDLPPRNEQFLLDFELLQSQFNDPEQLRTITESVLISLVVQCSNHAPRAEFLLFALRTLCRISYINWDTFLPSLLSSVSAAEASLSQGVQAAAATAGSSATSSQSVVPVSVNPTSLLPSAHGIGSPSASEVKSVENGQQIARAGQIVRENAMRNSQRIRAAAVNSLRQLSCKIILIGVESSLKPVTHAEIFQYMMNWLVNWDRRDLGTEDSVGKSWRSEKTLAEWLRSCLDVIWLLVEEGESRIPFYELLRSGLQFIENIPDDEALFTLIMEIHRRRDAMAMHMLMLDQHLHCPSFGTHRIVSQITANVPPEAVPHLRHSPITYPSVLGEPLYGEDLAMSIPKGSLDWERAVRCIRHAIRTTPSPDWWKRVLVVAPCYRPSTQAGPIPGAVFTSDMICEAIIDRIVELLKLTNSGNDCFGIDLVSVTFPPLYADANCWQEWLVFSDIFFFLIKSGCTDFVDFIDKLVLRLNGVDNHILRTNHVTWLLAQIIRVELVMTALNSDAKKVETTRKILSFHREDRNSDPNNPQSVLLDFVSSCQNLRIWSLSTTTRAYLNNEQLLKGKQIDEWWRSKGERMMDYMNMDDRSIGMFWVVSYTMAQPACETVINWLSSAGMAELPGLQPNDRVMMTQEVTPLPMSLLSGFSMNLCLKLALQMEEALFVSQVVPSIAMVETYTRLLLISPHSMFRSHFSQLAQRNASLLSKPGVTLLVLEILNYRLLPLYRYQGKSKTLMYDVTKIISALKGKRGDHRIFRLAENLCMNLILSLRDFFSVKREGKGPTEFTETLNRITIMTLAITIKTRGIADPDHMVYLQTMLEQILATSQHTWSEKTMRHFPSLLRETLKGRVDKRGLSIQAWQQAETTVINQCTQLLSPSAEPAYVSTYLSHSFPQHRQYLCAGACLLMQGHAENINSTNLARVLREVSPEEVTANIYTLVDVLLHHVHVDLQQGQSLEAVLDKAGANLAFFFWTHEMLPLDIFLLALIDRDDDPHALIIAMSLLKTPDLLLRIKNYCQNRGSPEHWLVTQVFKRNELQKALGNHLSWKDRYPTFFDDIAARLLPVIPLVLYRLIENNAMEQADNLLLAHSHFLAYHPLRFTFVRDILAYFYGHLPGKLVLRMLKVLDLSKIPFSESFPQYISPTGAPVCPPLDYFASLLLNLVNNVIPPLSSSSNCSSRSGSMADILNSSARPPHGKTPGTSQPGPANASEGQKAFYQIQDPGTYTQLVLETAVIEILSLPVSAAQIVSSLVQIIVNIQSTLIQSGNGFHGAANGVGQGSVLPTSPSGGSTDSMSASRSTCLIPGINTASFVSRSGYTCQQLSCLLIQACGLLLAQLPPDFHVQLYLEAARVTRETWWLKDGKRSQGELDSAVGYALMDPTWAAQDNTSTAIGNIVALLHAFFSNLPQEWLDGTNAIITNLRPVTSVAMLRVVFRIMGPLLPRLASTHTLFNKTLMLLLSALVDVFGKTAQTTAPVEASQIADLIDFLHHIIHYEGQGGAVQTSSKPRPDILALIGRAAETLRPDVQHLLAHLKTNPNSSIYAAAHQQNTAKTNTS.

Disordered stretches follow at residues 40-67 and 1230-1270; these read RQKP…DLPP and SSSS…NASE. A compositionally biased stretch (basic and acidic residues) spans 41 to 51; that stretch reads QKPDESLRDPP. Low complexity predominate over residues 1230 to 1241; that stretch reads SSSSNCSSRSGS.

It belongs to the Mediator complex subunit 23 family. In terms of assembly, component of the Mediator complex.

It localises to the nucleus. In terms of biological role, component of the Mediator complex, a coactivator involved in the regulated transcription of nearly all RNA polymerase II-dependent genes. Mediator functions as a bridge to convey information from gene-specific regulatory proteins to the basal RNA polymerase II transcription machinery. The Mediator complex, having a compact conformation in its free form, is recruited to promoters by direct interactions with regulatory proteins and serves for the assembly of a functional preinitiation complex with RNA polymerase II and the general transcription factors. The protein is Mediator of RNA polymerase II transcription subunit 23 (MED23) of Arabidopsis thaliana (Mouse-ear cress).